The chain runs to 517 residues: Zinc finger protein 215 (517 aa).

Residues 48 to 126 form the SCAN box domain; it reads RQKFRHFQYL…KDMVTLIEDV (79 aa). A KRAB domain is found at 164-237; the sequence is VTFKDVVVEF…EKEIPRKTIF (74 aa). 4 C2H2-type zinc fingers span residues 379-401, 407-429, 462-484, and 490-512; these read YECY…QIIH, YKCS…QKLH, YQCV…QMIH, and FKCK…QKLH.

Belongs to the krueppel C2H2-type zinc-finger protein family.

The protein localises to the nucleus. May be involved in transcriptional regulation. The sequence is that of Zinc finger protein 215 (ZNF215) from Homo sapiens (Human).